Consider the following 193-residue polypeptide: MLKFLSKIGDYTKETIQSARYIGQGLAVTFDHMRRRPVTVQYPYEKLIPSERFRGRIHFEFDKCISCEVCVRVCPINLPVVDWEFNKELKKKQLKHYSIDFGVCIFCANCVEYCPTNCLSVTEEYELSVYDRHELNFDNVAMGRLPYKVTEDPMVTPIREFAYLPEGTLSGHDLPEPAKRAGQLPQDIVKTLK.

4Fe-4S ferredoxin-type domains lie at 55–84 (GRIH…VDWE) and 95–124 (KHYS…VTEE). Residues cysteine 64, cysteine 67, cysteine 70, cysteine 74, cysteine 104, cysteine 107, cysteine 110, and cysteine 114 each coordinate [4Fe-4S] cluster.

It belongs to the complex I 23 kDa subunit family. NDH-1 is composed of at least 11 different subunits. It depends on [4Fe-4S] cluster as a cofactor.

Its subcellular location is the cellular thylakoid membrane. The catalysed reaction is a plastoquinone + NADH + (n+1) H(+)(in) = a plastoquinol + NAD(+) + n H(+)(out). It carries out the reaction a plastoquinone + NADPH + (n+1) H(+)(in) = a plastoquinol + NADP(+) + n H(+)(out). Functionally, NDH-1 shuttles electrons from an unknown electron donor, via FMN and iron-sulfur (Fe-S) centers, to quinones in the respiratory and/or the photosynthetic chain. The immediate electron acceptor for the enzyme in this species is believed to be plastoquinone. Couples the redox reaction to proton translocation, and thus conserves the redox energy in a proton gradient. This is NAD(P)H-quinone oxidoreductase subunit I from Cyanothece sp. (strain PCC 7425 / ATCC 29141).